Here is a 204-residue protein sequence, read N- to C-terminus: Lymphotoxin-alpha (204 aa).

The first 33 residues, 1 to 33 (MTPPGRLYLRRVCSTPILLLLGLLLALPPEAQG), serve as a signal peptide directing secretion. The 143-residue stretch at 62–204 (PAAHLVGDPS…SSVFFGAFAL (143 aa)) folds into the THD domain. Asn-95 carries N-linked (GlcNAc...) asparagine glycosylation. A disulfide bridge connects residues Cys-119 and Cys-155.

It belongs to the tumor necrosis factor family. Homotrimer, and heterotrimer of either two LTB and one LTA subunits or (less prevalent) two LTA and one LTB subunits. Interacts with TNFRSF14.

The protein resides in the secreted. Its subcellular location is the membrane. In terms of biological role, cytokine that in its homotrimeric form binds to TNFRSF1A/TNFR1, TNFRSF1B/TNFBR and TNFRSF14/HVEM. In its heterotrimeric form with LTB binds to TNFRSF3/LTBR. Lymphotoxin is produced by lymphocytes and is cytotoxic for a wide range of tumor cells in vitro and in vivo. This chain is Lymphotoxin-alpha (LTA), found in Sus scrofa (Pig).